We begin with the raw amino-acid sequence, 414 residues long: Multidrug resistance protein MdtG (414 aa).

10 consecutive transmembrane segments (helical) span residues 14–34 (LFVTWLGCFLTGAAFSLIMPF), 56–76 (LVFSITFLFSAIAAPFWGSLA), 89–109 (ALGMGIVMVLMGMAQNIWQFL), 113–133 (ALLGLLGGFIPNANALIATQV), 144–164 (TLSTGGVSGALIGPLIGGLLA), 171–191 (PVFFITAAVLFACFVMTWFYV), 219–239 (ILSLFVTTMIIQIATGSIAPI), 254–274 (LAFVSGMIASVPGVAALISAP), 288–308 (ILIAMLALSVLILIPMAFVQT), and 376–396 (AVFCVTAVVVLFNALYSYWCL).

Belongs to the major facilitator superfamily. DHA1 family. MdtG (TC 2.A.1.2.20) subfamily.

The protein localises to the cell inner membrane. This is Multidrug resistance protein MdtG from Yersinia enterocolitica serotype O:8 / biotype 1B (strain NCTC 13174 / 8081).